A 234-amino-acid polypeptide reads, in one-letter code: MSNHPLLQCINLCKRYQEGQLHTDVLRNVSFAIEPGELMAIVGSSGSGKSTLLHLLGGLDSPTSGEVIYQGRSLNQLSSTAKAELRNRELGFIYQFHHLLPDFTALENVAMPLLIGGSKPAEAQEKAHEMLAAVGLEKRSKHRPSELSGGERQRVAIARSLVNNPSLVLADEPTGNLDQRNADSIFNLLGELNVRQGTAFLVVTHDLQLAKRMSRQLEMRDGQLQHHLTLVGAE.

The ABC transporter domain occupies 7-233; it reads LQCINLCKRY…LQHHLTLVGA (227 aa). Residue 43-50 participates in ATP binding; sequence GSSGSGKS.

It belongs to the ABC transporter superfamily. Lipoprotein translocase (TC 3.A.1.125) family. The complex is composed of two ATP-binding proteins (LolD) and two transmembrane proteins (LolC and LolE).

The protein resides in the cell inner membrane. In terms of biological role, part of the ABC transporter complex LolCDE involved in the translocation of mature outer membrane-directed lipoproteins, from the inner membrane to the periplasmic chaperone, LolA. Responsible for the formation of the LolA-lipoprotein complex in an ATP-dependent manner. In Yersinia pestis bv. Antiqua (strain Antiqua), this protein is Lipoprotein-releasing system ATP-binding protein LolD.